The chain runs to 528 residues: uncharacterized protein (528 aa).

6 to 35 (DYVVVGTGSAGAVVASRLSTDPATTVVALE) contacts FAD. The active-site Proton acceptor is His468.

Belongs to the GMC oxidoreductase family. FAD serves as cofactor.

This is an uncharacterized protein from Mycobacterium bovis (strain ATCC BAA-935 / AF2122/97).